Reading from the N-terminus, the 256-residue chain is MTQRFKVTLAYDGTNFAGFQAQPNQRTVQFVLEKAINKMSKKDEYITVYGSGRTDSGVHALGQVVHFDFPHPISAKGMLRGLNSMLPLDCEVVDCKIVPNDFHSRYTTHGKRYLYRVSRGEFVNPFKRLYTGHYKYPLDIEKIKEAMPDVEGTHDYSSFVASGSQAKSHVRTIYEAKVYEDKVNDEIVFEFYGNGFLYNQVRIMVATLLEIGNGKRPVHDFLRLYEVKDRSQARQTAPASGLYLKEVYYDEEDEKL.

Residue Asp55 is the Nucleophile of the active site. Tyr113 provides a ligand contact to substrate.

The protein belongs to the tRNA pseudouridine synthase TruA family. Homodimer.

It carries out the reaction uridine(38/39/40) in tRNA = pseudouridine(38/39/40) in tRNA. In terms of biological role, formation of pseudouridine at positions 38, 39 and 40 in the anticodon stem and loop of transfer RNAs. The sequence is that of tRNA pseudouridine synthase A from Ligilactobacillus salivarius (strain UCC118) (Lactobacillus salivarius).